The primary structure comprises 353 residues: uncharacterized protein (353 aa).

The signal sequence occupies residues 1–28 (MHLTIMRRFAVLLLLAIFLGGCSGSNGA).

This is an uncharacterized protein from Archaeoglobus fulgidus (strain ATCC 49558 / DSM 4304 / JCM 9628 / NBRC 100126 / VC-16).